The primary structure comprises 520 residues: Aldehyde dehydrogenase 5, mitochondrial (520 aa).

Residues 1–23 constitute a mitochondrion transit peptide; the sequence is MLSRTRAAAPNSRIFTRSLLRLY. Residue 266–271 participates in NAD(+) binding; sequence GSTATG. The active-site Proton acceptor is the E288. The active-site Nucleophile is the C322.

This sequence belongs to the aldehyde dehydrogenase family.

Its subcellular location is the mitochondrion matrix. The catalysed reaction is an aldehyde + NADP(+) + H2O = a carboxylate + NADPH + 2 H(+). It carries out the reaction an aldehyde + NAD(+) + H2O = a carboxylate + NADH + 2 H(+). Its pathway is alcohol metabolism; ethanol degradation; acetate from ethanol: step 2/2. Its activity is regulated as follows. Induced by potassium ions. Its function is as follows. Minor mitochondrial aldehyde dehydrogenase isoform. Plays a role in regulation or biosynthesis of electron transport chain components. Involved in the biosynthesis of acetate during anaerobic growth on glucose. The protein is Aldehyde dehydrogenase 5, mitochondrial (ALD5) of Saccharomyces cerevisiae (strain YJM789) (Baker's yeast).